The primary structure comprises 319 residues: Ribonuclease Z (319 aa).

Zn(2+)-binding residues include His-62, His-64, Asp-66, His-67, His-139, Asp-209, and His-268. The Proton acceptor role is filled by Asp-66.

It belongs to the RNase Z family. Homodimer. Zn(2+) is required as a cofactor.

The catalysed reaction is Endonucleolytic cleavage of RNA, removing extra 3' nucleotides from tRNA precursor, generating 3' termini of tRNAs. A 3'-hydroxy group is left at the tRNA terminus and a 5'-phosphoryl group is left at the trailer molecule.. Zinc phosphodiesterase, which displays some tRNA 3'-processing endonuclease activity. Probably involved in tRNA maturation, by removing a 3'-trailer from precursor tRNA. This is Ribonuclease Z from Pseudomonas putida (strain ATCC 47054 / DSM 6125 / CFBP 8728 / NCIMB 11950 / KT2440).